The primary structure comprises 521 residues: Tigger transposable element-derived protein 6 (521 aa).

The HTH psq-type domain maps to 3-54 (NKGNKKRRQFSLEEKMKVVGAVDSGKRKGDVAKEFGITPSTLSTFLKDRTKF). 2 consecutive DNA-binding regions (H-T-H motif) follow at residues 30 to 50 (KGDV…FLKD) and 99 to 130 (SVIR…FRDR). The 72-residue stretch at 66-137 (QRKRMRSALY…RDRHGIALKA (72 aa)) folds into the HTH CENPB-type domain. The DDE-1 domain maps to 170–372 (YSPDDIFNAD…VKPSTVVKCW (203 aa)).

It belongs to the tigger transposable element derived protein family.

The protein localises to the nucleus. The chain is Tigger transposable element-derived protein 6 (TIGD6) from Homo sapiens (Human).